A 463-amino-acid chain; its full sequence is Asparagine--tRNA ligase (463 aa).

Belongs to the class-II aminoacyl-tRNA synthetase family. In terms of assembly, homodimer.

It localises to the cytoplasm. The enzyme catalyses tRNA(Asn) + L-asparagine + ATP = L-asparaginyl-tRNA(Asn) + AMP + diphosphate + H(+). This Clostridium novyi (strain NT) protein is Asparagine--tRNA ligase.